The sequence spans 246 residues: MVFEVIPAVDMRGGKCVQLVQGVPGSEIVSIDDPLAVALDWVSKGAKTLHLVDLDGAIEGERKNSPIIEKIVNTCKEKGVSIQVGGGIRSFEDAASLLEIGVSRIILGTAALQNPELVKQLSSSFGSSHVNVALDAKNGKISIKGWTEECAQTPVEMGRKFEELGAGSLLFTNIDTEGLMQGVNPVPTKELVESVSIPVIASGGVSTLEDIKTLKKTGAAGVVVGSALYMGRFTLEEAINAALGDI.

Aspartate 10 serves as the catalytic Proton acceptor. Residue aspartate 135 is the Proton donor of the active site.

It belongs to the HisA/HisF family.

The protein resides in the cytoplasm. The enzyme catalyses 1-(5-phospho-beta-D-ribosyl)-5-[(5-phospho-beta-D-ribosylamino)methylideneamino]imidazole-4-carboxamide = 5-[(5-phospho-1-deoxy-D-ribulos-1-ylimino)methylamino]-1-(5-phospho-beta-D-ribosyl)imidazole-4-carboxamide. The protein operates within amino-acid biosynthesis; L-histidine biosynthesis; L-histidine from 5-phospho-alpha-D-ribose 1-diphosphate: step 4/9. This is 1-(5-phosphoribosyl)-5-[(5-phosphoribosylamino)methylideneamino] imidazole-4-carboxamide isomerase from Methanosarcina mazei (strain ATCC BAA-159 / DSM 3647 / Goe1 / Go1 / JCM 11833 / OCM 88) (Methanosarcina frisia).